Reading from the N-terminus, the 340-residue chain is Probable HTH-type transcriptional regulator EndR (340 aa).

The HTH lacI-type domain occupies Met-1 to Gln-58. Positions Met-5 to Gln-24 form a DNA-binding region, H-T-H motif.

Functionally, putative repressor of the endoglucanase operon. In Paenibacillus polymyxa (Bacillus polymyxa), this protein is Probable HTH-type transcriptional regulator EndR (endR).